A 337-amino-acid polypeptide reads, in one-letter code: Calcium-binding protein 39-like (337 aa).

This sequence belongs to the Mo25 family. In terms of assembly, component of a trimeric complex composed of STK11/LKB1, STRAD (STRADA or STRADB) and CAB39/MO25 (CAB39/MO25alpha or CAB39L/MO25beta): the complex tethers STK11/LKB1 in the cytoplasm and stimulates its catalytic activity.

Component of a complex that binds and activates STK11/LKB1. In the complex, required to stabilize the interaction between CAB39/MO25 (CAB39/MO25alpha or CAB39L/MO25beta) and STK11/LKB1. This chain is Calcium-binding protein 39-like (CAB39L), found in Homo sapiens (Human).